The following is a 380-amino-acid chain: Tubulin alpha chain (380 aa).

The GTP site is built by E46, S115, G119, T120, T154, N181, and N202. Residue E46 participates in Mg(2+) binding. Residue E228 is part of the active site.

It belongs to the tubulin family. Dimer of alpha and beta chains. A typical microtubule is a hollow water-filled tube with an outer diameter of 25 nm and an inner diameter of 15 nM. Alpha-beta heterodimers associate head-to-tail to form protofilaments running lengthwise along the microtubule wall with the beta-tubulin subunit facing the microtubule plus end conferring a structural polarity. Microtubules usually have 13 protofilaments but different protofilament numbers can be found in some organisms and specialized cells. Requires Mg(2+) as cofactor.

It is found in the cytoplasm. It localises to the cytoskeleton. It catalyses the reaction GTP + H2O = GDP + phosphate + H(+). In terms of biological role, tubulin is the major constituent of microtubules, a cylinder consisting of laterally associated linear protofilaments composed of alpha- and beta-tubulin heterodimers. Microtubules grow by the addition of GTP-tubulin dimers to the microtubule end, where a stabilizing cap forms. Below the cap, tubulin dimers are in GDP-bound state, owing to GTPase activity of alpha-tubulin. The protein is Tubulin alpha chain (TUB1) of Encephalitozoon hellem (Microsporidian parasite).